A 254-amino-acid chain; its full sequence is UPF0246 protein lpp1320 (254 aa).

The protein belongs to the UPF0246 family.

In Legionella pneumophila (strain Paris), this protein is UPF0246 protein lpp1320.